A 182-amino-acid polypeptide reads, in one-letter code: Adenine phosphoribosyltransferase (182 aa).

Belongs to the purine/pyrimidine phosphoribosyltransferase family. Homodimer.

The protein localises to the cytoplasm. It carries out the reaction AMP + diphosphate = 5-phospho-alpha-D-ribose 1-diphosphate + adenine. Its pathway is purine metabolism; AMP biosynthesis via salvage pathway; AMP from adenine: step 1/1. Functionally, catalyzes a salvage reaction resulting in the formation of AMP, that is energically less costly than de novo synthesis. In Campylobacter fetus subsp. fetus (strain 82-40), this protein is Adenine phosphoribosyltransferase.